A 238-amino-acid chain; its full sequence is Cysteine-rich venom protein (238 aa).

The N-terminal stretch at 1-19 (MIAFIVLLSLAAVLQQSSG) is a signal peptide. The region spanning 38 to 164 (VDKHNALRRS…STKYLYVCQY (127 aa)) is the SCP domain. Disulfide bonds link Cys-75/Cys-153, Cys-92/Cys-165, Cys-148/Cys-162, Cys-184/Cys-191, Cys-187/Cys-196, Cys-200/Cys-233, Cys-209/Cys-227, and Cys-218/Cys-231. The 34-residue stretch at 200 to 233 (CKYEDAFTNCNELAKETKCKTEWIKSKCPATCFC) folds into the ShKT domain.

This sequence belongs to the CRISP family. In terms of tissue distribution, expressed by the venom gland.

It localises to the secreted. Its function is as follows. Blocks olfactory (CNGA2) and retinal (CNGA1) CNG channel currents. Does not affect neither depolarization- nor caffeine-induced contraction of smooth muscle. The protein is Cysteine-rich venom protein of Drysdalia coronoides (White-lipped snake).